The chain runs to 348 residues: CCN family member 2 (348 aa).

Positions 1–25 (MLASVAGPISLALVLLALCTRPAMG) are cleaved as a signal peptide. An IGFBP N-terminal domain is found at 26–97 (QDCSAQCQCA…NRKIGVCTAK (72 aa)). Disulfide bonds link Cys-28–Cys-53, Cys-32–Cys-55, Cys-34–Cys-56, Cys-42–Cys-59, Cys-67–Cys-81, and Cys-73–Cys-94. Residues 100 to 166 (APCVFGGSVY…GKCCEEWVCD (67 aa)) enclose the VWFC domain. Residues 197–242 (NCLVQTTEWSACSKTCGMGISTRVTNDNTFCRLEKQSRLCMVRPCE) enclose the TSP type-1 domain. Residues 246-348 (EENIKKGKKC…YYRKMYGDMA (103 aa)) are heparin-binding. 5 disulfide bridges follow: Cys-255-Cys-292, Cys-272-Cys-306, Cys-283-Cys-322, Cys-286-Cys-324, and Cys-291-Cys-328. The CTCK domain occupies 255 to 329 (CIRTPKIAKP…KTCACHYNCP (75 aa)).

The protein belongs to the CCN family. As to quaternary structure, monomer. Interacts with TSKU. In terms of tissue distribution, testis, spleen, kidney, lung, heart, and brain (lowest level in testis and highest in lung).

The protein localises to the secreted. Its subcellular location is the extracellular space. It localises to the extracellular matrix. Major connective tissue mitoattractant secreted by vascular endothelial cells. Promotes proliferation and differentiation of chondrocytes. Is involved in the stimulation of osteoblast differentiation and has a critical role in osteogenesis. Mediates heparin- and divalent cation-dependent cell adhesion in many cell types including fibroblasts, myofibroblasts, endothelial and epithelial cells. Enhances fibroblast growth factor-induced DNA synthesis. This chain is CCN family member 2, found in Mus musculus (Mouse).